Consider the following 381-residue polypeptide: Lipid-A-disaccharide synthase (381 aa).

The protein belongs to the LpxB family.

It catalyses the reaction a lipid X + a UDP-2-N,3-O-bis[(3R)-3-hydroxyacyl]-alpha-D-glucosamine = a lipid A disaccharide + UDP + H(+). It functions in the pathway bacterial outer membrane biogenesis; LPS lipid A biosynthesis. In terms of biological role, condensation of UDP-2,3-diacylglucosamine and 2,3-diacylglucosamine-1-phosphate to form lipid A disaccharide, a precursor of lipid A, a phosphorylated glycolipid that anchors the lipopolysaccharide to the outer membrane of the cell. The polypeptide is Lipid-A-disaccharide synthase (Solibacter usitatus (strain Ellin6076)).